We begin with the raw amino-acid sequence, 407 residues long: tRNA (uracil(54)-C(5))-methyltransferase (407 aa).

[4Fe-4S] cluster contacts are provided by C61, C67, C70, and C137. Residues Q253, Y279, T284, 300 to 301 (DS), D327, and D341 each bind S-adenosyl-L-methionine. C368 acts as the Nucleophile in catalysis. E400 (proton acceptor) is an active-site residue.

It belongs to the class I-like SAM-binding methyltransferase superfamily. RNA M5U methyltransferase family.

The catalysed reaction is uridine(54) in tRNA + S-adenosyl-L-methionine = 5-methyluridine(54) in tRNA + S-adenosyl-L-homocysteine + H(+). Its function is as follows. Catalyzes the formation of 5-methyl-uridine at position 54 (m5U54) in tRNA. The chain is tRNA (uracil(54)-C(5))-methyltransferase from Pyrococcus horikoshii (strain ATCC 700860 / DSM 12428 / JCM 9974 / NBRC 100139 / OT-3).